The chain runs to 766 residues: Dolichyl pyrophosphate Glc1Man9GlcNAc2 alpha-1,3-glucosyltransferase (766 aa).

Helical transmembrane passes span 6–26, 60–80, 96–116, 156–176, 190–210, 228–248, 324–344, 350–370, 395–415, 423–443, 452–472, and 482–502; these read LVLA…PAYV, YPPF…FFGF, ILIF…AVCA, SIHF…LFFI, ILLN…FYYL, AISL…PFIH, PMGT…GLVI, ADFS…GYHV, ILIH…FTPF, ICVS…LMPL, VASW…HKWL, and LMAI…ALIW.

Belongs to the ALG6/ALG8 glucosyltransferase family.

It is found in the endoplasmic reticulum membrane. The enzyme catalyses an alpha-D-Glc-(1-&gt;3)-alpha-D-Man-(1-&gt;2)-alpha-D-Man-(1-&gt;2)-alpha-D-Man-(1-&gt;3)-[alpha-D-Man-(1-&gt;2)-alpha-D-Man-(1-&gt;3)-[alpha-D-Man-(1-&gt;2)-alpha-D-Man-(1-&gt;6)]-alpha-D-Man-(1-&gt;6)]-beta-D-Man-(1-&gt;4)-beta-D-GlcNAc-(1-&gt;4)-alpha-D-GlcNAc-diphospho-di-trans,poly-cis-dolichol + a di-trans,poly-cis-dolichyl beta-D-glucosyl phosphate = an alpha-D-Glc-(1-&gt;3)-alpha-D-Glc-(1-&gt;3)-alpha-D-Man-(1-&gt;2)-alpha-D-Man-(1-&gt;2)-alpha-D-Man-(1-&gt;3)-[alpha-D-Man-(1-&gt;2)-alpha-D-Man-(1-&gt;3)-[alpha-D-Man-(1-&gt;2)-alpha-D-Man-(1-&gt;6)]-alpha-D-Man-(1-&gt;6)]-beta-D-Man-(1-&gt;4)-beta-D-GlcNAc-(1-&gt;4)-alpha-D-GlcNAc-diphospho-di-trans,poly-cis-dolichol + a di-trans,poly-cis-dolichyl phosphate + H(+). The protein operates within protein modification; protein glycosylation. Its function is as follows. Dolichyl pyrophosphate Glc1Man9GlcNAc2 alpha-1,3-glucosyltransferase that operates in the biosynthetic pathway of dolichol-linked oligosaccharides, the glycan precursors employed in protein asparagine (N)-glycosylation. The assembly of dolichol-linked oligosaccharides begins on the cytosolic side of the endoplasmic reticulum membrane and finishes in its lumen. The sequential addition of sugars to dolichol pyrophosphate produces dolichol-linked oligosaccharides containing fourteen sugars, including two GlcNAcs, nine mannoses and three glucoses. Once assembled, the oligosaccharide is transferred from the lipid to nascent proteins by oligosaccharyltransferases. In the lumen of the endoplasmic reticulum, adds the second glucose residue from dolichyl phosphate glucose (Dol-P-Glc) onto the lipid-linked oligosaccharide intermediate Glc(1)Man(9)GlcNAc(2)-PP-Dol to produce Glc(2)Man(9)GlcNAc(2)-PP-Dol. The protein is Dolichyl pyrophosphate Glc1Man9GlcNAc2 alpha-1,3-glucosyltransferase of Caenorhabditis elegans.